A 449-amino-acid polypeptide reads, in one-letter code: Probable glycine dehydrogenase (decarboxylating) subunit 1 (449 aa).

It belongs to the GcvP family. N-terminal subunit subfamily. The glycine cleavage system is composed of four proteins: P, T, L and H. In this organism, the P 'protein' is a heterodimer of two subunits.

The catalysed reaction is N(6)-[(R)-lipoyl]-L-lysyl-[glycine-cleavage complex H protein] + glycine + H(+) = N(6)-[(R)-S(8)-aminomethyldihydrolipoyl]-L-lysyl-[glycine-cleavage complex H protein] + CO2. Its function is as follows. The glycine cleavage system catalyzes the degradation of glycine. The P protein binds the alpha-amino group of glycine through its pyridoxal phosphate cofactor; CO(2) is released and the remaining methylamine moiety is then transferred to the lipoamide cofactor of the H protein. This chain is Probable glycine dehydrogenase (decarboxylating) subunit 1, found in Pyrococcus abyssi (strain GE5 / Orsay).